The primary structure comprises 493 residues: Glycerol kinase (493 aa).

T12 lines the ADP pocket. ATP-binding residues include T12, T13, and S14. T12 provides a ligand contact to sn-glycerol 3-phosphate. R16 is an ADP binding site. Positions 82, 83, 132, and 239 each coordinate sn-glycerol 3-phosphate. Glycerol-binding residues include R82, E83, Y132, D239, and Q240. ADP is bound by residues T261 and G303. The ATP site is built by T261, G303, Q307, and G402. G402 and N406 together coordinate ADP.

The protein belongs to the FGGY kinase family.

The catalysed reaction is glycerol + ATP = sn-glycerol 3-phosphate + ADP + H(+). The protein operates within polyol metabolism; glycerol degradation via glycerol kinase pathway; sn-glycerol 3-phosphate from glycerol: step 1/1. In terms of biological role, key enzyme in the regulation of glycerol uptake and metabolism. Catalyzes the phosphorylation of glycerol to yield sn-glycerol 3-phosphate. The chain is Glycerol kinase from Thermococcus gammatolerans (strain DSM 15229 / JCM 11827 / EJ3).